The primary structure comprises 265 residues: MEMO1 family protein Mbar_A1422 (265 aa).

Belongs to the MEMO1 family.

The polypeptide is MEMO1 family protein Mbar_A1422 (Methanosarcina barkeri (strain Fusaro / DSM 804)).